The primary structure comprises 272 residues: Large ribosomal subunit protein uL4 (272 aa).

The protein belongs to the universal ribosomal protein uL4 family. As to quaternary structure, part of the 50S ribosomal subunit.

One of the primary rRNA binding proteins, this protein initially binds near the 5'-end of the 23S rRNA. It is important during the early stages of 50S assembly. It makes multiple contacts with different domains of the 23S rRNA in the assembled 50S subunit and ribosome. In terms of biological role, forms part of the polypeptide exit tunnel. This is Large ribosomal subunit protein uL4 from Aeropyrum pernix (strain ATCC 700893 / DSM 11879 / JCM 9820 / NBRC 100138 / K1).